We begin with the raw amino-acid sequence, 259 residues long: Ribonuclease PH (259 aa).

Phosphate contacts are provided by residues arginine 88 and 126 to 128 (GTR).

Belongs to the RNase PH family. As to quaternary structure, homohexameric ring arranged as a trimer of dimers.

The enzyme catalyses tRNA(n+1) + phosphate = tRNA(n) + a ribonucleoside 5'-diphosphate. Phosphorolytic 3'-5' exoribonuclease that plays an important role in tRNA 3'-end maturation. Removes nucleotide residues following the 3'-CCA terminus of tRNAs; can also add nucleotides to the ends of RNA molecules by using nucleoside diphosphates as substrates, but this may not be physiologically important. Probably plays a role in initiation of 16S rRNA degradation (leading to ribosome degradation) during starvation. In Mycobacterium ulcerans (strain Agy99), this protein is Ribonuclease PH.